We begin with the raw amino-acid sequence, 156 residues long: Ribosomal RNA large subunit methyltransferase H (156 aa).

S-adenosyl-L-methionine-binding positions include leucine 72, glycine 104, and 123–128; that span reads LGKMVW.

The protein belongs to the RNA methyltransferase RlmH family. Homodimer.

The protein localises to the cytoplasm. The enzyme catalyses pseudouridine(1915) in 23S rRNA + S-adenosyl-L-methionine = N(3)-methylpseudouridine(1915) in 23S rRNA + S-adenosyl-L-homocysteine + H(+). In terms of biological role, specifically methylates the pseudouridine at position 1915 (m3Psi1915) in 23S rRNA. This chain is Ribosomal RNA large subunit methyltransferase H, found in Roseobacter denitrificans (strain ATCC 33942 / OCh 114) (Erythrobacter sp. (strain OCh 114)).